The sequence spans 252 residues: 2-succinyl-6-hydroxy-2,4-cyclohexadiene-1-carboxylate synthase (252 aa).

It belongs to the AB hydrolase superfamily. MenH family. In terms of assembly, monomer.

It carries out the reaction 5-enolpyruvoyl-6-hydroxy-2-succinyl-cyclohex-3-ene-1-carboxylate = (1R,6R)-6-hydroxy-2-succinyl-cyclohexa-2,4-diene-1-carboxylate + pyruvate. Its pathway is quinol/quinone metabolism; 1,4-dihydroxy-2-naphthoate biosynthesis; 1,4-dihydroxy-2-naphthoate from chorismate: step 3/7. The protein operates within quinol/quinone metabolism; menaquinone biosynthesis. In terms of biological role, catalyzes a proton abstraction reaction that results in 2,5-elimination of pyruvate from 2-succinyl-5-enolpyruvyl-6-hydroxy-3-cyclohexene-1-carboxylate (SEPHCHC) and the formation of 2-succinyl-6-hydroxy-2,4-cyclohexadiene-1-carboxylate (SHCHC). The protein is 2-succinyl-6-hydroxy-2,4-cyclohexadiene-1-carboxylate synthase of Escherichia coli (strain ATCC 8739 / DSM 1576 / NBRC 3972 / NCIMB 8545 / WDCM 00012 / Crooks).